The primary structure comprises 63 residues: Defensin-like protein 278 (63 aa).

The N-terminal stretch at 1-15 is a signal peptide; that stretch reads MSLVYMYMYIGVVMS. 3 disulfide bridges follow: cysteine 31–cysteine 48, cysteine 37–cysteine 53, and cysteine 41–cysteine 55.

This sequence belongs to the DEFL family.

It localises to the secreted. The polypeptide is Defensin-like protein 278 (Arabidopsis thaliana (Mouse-ear cress)).